We begin with the raw amino-acid sequence, 205 residues long: uncharacterized protein (205 aa).

The protein belongs to the IIV-6 170L family.

This is an uncharacterized protein from Invertebrate iridescent virus 3 (IIV-3).